The chain runs to 256 residues: Alcohol dehydrogenase (256 aa).

12-35 (FVAGLGGIGLDTSKELVKRDLKNL) contributes to the NAD(+) binding site. Substrate is bound at residue Ser-140. Catalysis depends on Tyr-153, which acts as the Proton acceptor.

Belongs to the short-chain dehydrogenases/reductases (SDR) family. In terms of assembly, homodimer.

The enzyme catalyses a primary alcohol + NAD(+) = an aldehyde + NADH + H(+). It carries out the reaction a secondary alcohol + NAD(+) = a ketone + NADH + H(+). The chain is Alcohol dehydrogenase (Adh) from Drosophila mauritiana (Fruit fly).